We begin with the raw amino-acid sequence, 135 residues long: Gene 52 protein (135 aa).

2 disordered regions span residues 1–20 and 110–135; these read MASG…PTPE and LGGR…AEKQ. The span at 122–135 shows a compositional bias: basic residues; that stretch reads SKPRGRSKHRAEKQ.

This sequence belongs to the herpesviridae BLRF2 family.

This Equine herpesvirus 2 (strain 86/87) (EHV-2) protein is Gene 52 protein (52).